A 362-amino-acid polypeptide reads, in one-letter code: UDP-N-acetylglucosamine--N-acetylmuramyl-(pentapeptide) pyrophosphoryl-undecaprenol N-acetylglucosamine transferase (362 aa).

UDP-N-acetyl-alpha-D-glucosamine is bound by residues 14 to 16 (TGG), Arg-170, Ser-199, and Gln-289.

Belongs to the glycosyltransferase 28 family. MurG subfamily.

The protein resides in the cell inner membrane. The catalysed reaction is di-trans,octa-cis-undecaprenyl diphospho-N-acetyl-alpha-D-muramoyl-L-alanyl-D-glutamyl-meso-2,6-diaminopimeloyl-D-alanyl-D-alanine + UDP-N-acetyl-alpha-D-glucosamine = di-trans,octa-cis-undecaprenyl diphospho-[N-acetyl-alpha-D-glucosaminyl-(1-&gt;4)]-N-acetyl-alpha-D-muramoyl-L-alanyl-D-glutamyl-meso-2,6-diaminopimeloyl-D-alanyl-D-alanine + UDP + H(+). Its pathway is cell wall biogenesis; peptidoglycan biosynthesis. Its function is as follows. Cell wall formation. Catalyzes the transfer of a GlcNAc subunit on undecaprenyl-pyrophosphoryl-MurNAc-pentapeptide (lipid intermediate I) to form undecaprenyl-pyrophosphoryl-MurNAc-(pentapeptide)GlcNAc (lipid intermediate II). This is UDP-N-acetylglucosamine--N-acetylmuramyl-(pentapeptide) pyrophosphoryl-undecaprenol N-acetylglucosamine transferase from Borrelia hermsii (strain HS1 / DAH).